A 392-amino-acid chain; its full sequence is Protein NolC (392 aa).

Positions 2–71 (KRDLYETLGV…RAAYDRYGHA (70 aa)) constitute a J domain. Disordered regions lie at residues 103–142 (RRDDGRRSSAPLLGRSRTRCGPSLQHGDHPRGGLFRQDGA) and 157–244 (LGRE…TGLR). The segment covering 157-170 (LGREAGHQPEDLRH) has biased composition (basic and acidic residues). A compositionally biased stretch (low complexity) spans 171 to 185 (LPGLRPYPRRPGLLL). The segment covering 186-203 (DRTHLPDLRRSRSDDHRS) has biased composition (basic and acidic residues). The span at 227-241 (HRGRHAYPPLRRGRT) shows a compositional bias: basic residues.

The chain is Protein NolC (nolC) from Rhizobium fredii (Sinorhizobium fredii).